The sequence spans 600 residues: Polypeptide N-acetylgalactosaminyltransferase (600 aa).

At 1–7 (MVRRKLR) the chain is on the cytoplasmic side. The chain crosses the membrane as a helical; Signal-anchor for type II membrane protein span at residues 8 to 28 (LLVILAGIWLVGIVVYLFKGD). The Lumenal portion of the chain corresponds to 29 to 600 (DQSEFEKRVI…KWTFSLSKNR (572 aa)). Cystine bridges form between Cys-154/Cys-382, Cys-373/Cys-451, Cys-484/Cys-501, Cys-524/Cys-541, and Cys-567/Cys-583. A catalytic subdomain A region spans residues 163 to 268 (LPDTSVIITF…EKWLEPLLDR (106 aa)). Substrate is bound by residues Thr-171, Asp-204, and Arg-229. Asp-252 contacts Mn(2+). Ser-253 contacts substrate. Residue His-254 coordinates Mn(2+). The interval 328-390 (PIRTPMIAGG…PCSRVGHVFR (63 aa)) is catalytic subdomain B. Residue Trp-359 participates in substrate binding. A Mn(2+)-binding site is contributed by His-387. Residues Arg-390, His-393, and Tyr-395 each contribute to the substrate site. One can recognise a Ricin B-type lectin domain in the interval 466-595 (KIPSVQDIAF…SSYTQKWTFS (130 aa)).

This sequence belongs to the glycosyltransferase 2 family. GalNAc-T subfamily. The cofactor is Mn(2+). O-glycosylated.

Its subcellular location is the golgi apparatus membrane. It carries out the reaction L-seryl-[protein] + UDP-N-acetyl-alpha-D-galactosamine = a 3-O-[N-acetyl-alpha-D-galactosaminyl]-L-seryl-[protein] + UDP + H(+). It catalyses the reaction L-threonyl-[protein] + UDP-N-acetyl-alpha-D-galactosamine = a 3-O-[N-acetyl-alpha-D-galactosaminyl]-L-threonyl-[protein] + UDP + H(+). It participates in protein modification; protein glycosylation. Its activity is regulated as follows. No change in activity by addition of up to 10% methanol or glycerol, or 5% acetonitrile. 40% reduction in activity by 10% acetonitrile or by lyophilization. Activity requires divalent cations, the best being Mn(2+) (10-20 mM), followed by Co(2+), Mg(2+) and Ca(2+). Loss of activity with Cu(2+) or in the presence of EDTA. Inhibited by UDP, but not by UMP, UTP, ADP or GDP nucleotides. No inhibition by galactose, N-acetylglucosamine or N-acetylgalactosamine sugars. In terms of biological role, catalyzes the initial reaction in O-linked oligosaccharide biosynthesis, the transfer of an N-acetyl-D-galactosamine residue to a serine or threonine residue on the protein receptor. Has a broad substrate specificity. Acceptor peptides include Muc2, Muc5Ac, Muc1a and Muc1a', with Muc2 as the best acceptor. Acts on non-glycosylated and mono- or multi-glycosylated peptide substrates. Transfers preferably to threonine rather than serine residue. Thr-15 is the most preferred site of glycosylation in Muc2 peptide PTTTPITTTTTVTPTPTPTGTQTK having proline residues at position -1, and at positions +1 and +3, where the number represents the distance from the C-terminal and N-terminal hydroxyl amino acid, respectively. Transfer of the N-acetyl-D-galactosamine (GalNAc) is optimal with proline residues at positions -3, -1, +1 and +3, but other amino acids are tolerated, although some, such as phenylalanine, isoleucine or leucine at -1, or lysine at +3 prevent the transfer completely. Second GalNAc is transferred to Muc2 Thr-2 or Thr-13, both of which have two proline residues nearby. Up to nine sites can be glycosylated within Muc2, but eight are used simultaneously since Thr-19 and Thr-21 are not detected to be glycosylated at the same time. Glycosylation is not detected of a potential site, which is next to an already glycosylated site, but only one amino acid is needed in between two glycosylation sites. Ser-5 is the preferred glycosylation site in Muc5Ac peptide GTTPSPVPTTSTTSAP into which up to four GalNAcs can be attached. Only the threonine residues are detected as pontential glycosylation sites in Muc1a APPAHGVTSAPDTRPAPGC and Muc1a' AHGVTSAPDTR peptides. Transferase activity is restricted to UDP-GalNAc as a donor, and none of the nucleotide sugars UDP-Gal, UDP-GlcNAc, GDP-fucose, UDP-xylose, UDP-glucuronic acid or CMP-neuraminic acid are utilized as donors. This chain is Polypeptide N-acetylgalactosaminyltransferase, found in Biomphalaria glabrata (Bloodfluke planorb).